The chain runs to 1284 residues: Collagen alpha-1(XX) chain (1284 aa).

An N-terminal signal peptide occupies residues 1 to 22 (MSSGDPAHLGLCLWLWLGATLG). The region spanning 28–119 (ASGLLRLAVL…EFVIEDLKSS (92 aa)) is the Fibronectin type-III 1 domain. The tract at residues 122–171 (DRSSQRPLGSGAPEPTPSHTGSPDPEQASEPQVAFTPSQDPRTPAGPQFR) is disordered. The VWFA domain occupies 179 to 354 (DMVFLVDGSW…GALAGLLSRL (176 aa)). 5 Fibronectin type-III domains span residues 379–468 (APTS…APLP), 469–559 (PPRA…TLAP), 560–647 (PRHL…TKKA), 649–738 (SPSQ…TPST), and 743–833 (PPSN…ACPA). Residue asparagine 607 is glycosylated (N-linked (GlcNAc...) asparagine). The region spanning 842 to 1037 (GFDLMVAFSL…LQMLQIVCSD (196 aa)) is the Laminin G-like domain. Disordered regions lie at residues 1065–1190 (SCSS…EKGE) and 1212–1284 (SFHE…GLWE). The segment covering 1071–1082 (PGPPGPQGPPGL) has biased composition (pro residues). 2 Collagen-like domains span residues 1071–1127 (PGPP…IPGR) and 1133–1190 (PKGM…EKGE). Low complexity-rich tracts occupy residues 1112–1125 (LPGLQGHPGHQGIP) and 1166–1181 (ERGPPGTVGPTGLPGP). Positions 1271–1284 (SPGQQGASTQGLWE) are enriched in polar residues.

High expression in heart, lung, liver, skeletal muscle, kidney, pancreas, spleen, testis, ovary, subthalamic nucleus and fetal liver. Weak expression in other tissues tested.

It localises to the secreted. Its subcellular location is the extracellular space. Functionally, probable collagen protein. In Homo sapiens (Human), this protein is Collagen alpha-1(XX) chain (COL20A1).